The following is a 332-amino-acid chain: Putative potassium channel regulatory protein sup-10 (332 aa).

The signal sequence occupies residues 1–18; the sequence is MRYAVFIFLIVLIDLIYC. Over 19 to 301 the chain is Extracellular; it reads WNSKRSFFIP…EISERNKRPA (283 aa). 3 N-linked (GlcNAc...) asparagine glycosylation sites follow: Asn61, Asn107, and Asn166. The helical transmembrane segment at 302–322 threads the bilayer; that stretch reads FVLVGLTGGIAVIILAFSIFW. Topologically, residues 323-332 are cytoplasmic; it reads GLNGSGFNKD.

In terms of assembly, may form a complex with sup-9 and unc-93 where sup-10 and unc-93 act as regulatory subunits of the two pore potassium channel sup-9. Sup-10 may regulate sup-9 via sup-18. Low levels in body-wall muscles, eight vulval muscles, intestinal muscles and anal depressor muscle.

The protein resides in the membrane. Functionally, may contribute to coordination of muscle contraction as regulatory subunit of a nonessential potassium channel complex. The protein is Putative potassium channel regulatory protein sup-10 of Caenorhabditis elegans.